A 341-amino-acid polypeptide reads, in one-letter code: S-adenosylmethionine:tRNA ribosyltransferase-isomerase (341 aa).

This sequence belongs to the QueA family. Monomer.

Its subcellular location is the cytoplasm. It carries out the reaction 7-aminomethyl-7-carbaguanosine(34) in tRNA + S-adenosyl-L-methionine = epoxyqueuosine(34) in tRNA + adenine + L-methionine + 2 H(+). The protein operates within tRNA modification; tRNA-queuosine biosynthesis. Its function is as follows. Transfers and isomerizes the ribose moiety from AdoMet to the 7-aminomethyl group of 7-deazaguanine (preQ1-tRNA) to give epoxyqueuosine (oQ-tRNA). The polypeptide is S-adenosylmethionine:tRNA ribosyltransferase-isomerase (Clostridium botulinum (strain Eklund 17B / Type B)).